A 229-amino-acid chain; its full sequence is RNA pyrophosphohydrolase (229 aa).

The Nudix hydrolase domain occupies 6–149 (GFRPNVGIIL…KRGVYEMALT (144 aa)). A Nudix box motif is present at residues 38 to 59 (GGIDRGETPEQAMFRELHEEVG). Residues 168-229 (SGMRPREAHE…QVLHPDPGKA (62 aa)) are disordered.

This sequence belongs to the Nudix hydrolase family. RppH subfamily. The cofactor is a divalent metal cation.

Its function is as follows. Accelerates the degradation of transcripts by removing pyrophosphate from the 5'-end of triphosphorylated RNA, leading to a more labile monophosphorylated state that can stimulate subsequent ribonuclease cleavage. The chain is RNA pyrophosphohydrolase from Delftia acidovorans (strain DSM 14801 / SPH-1).